A 963-amino-acid polypeptide reads, in one-letter code: Integrator complex subunit 4 (963 aa).

Lys-26 carries the N6-acetyllysine modification. HEAT repeat units follow at residues 66 to 105, 145 to 183, 190 to 228, 229 to 263, 277 to 313, 369 to 405, 406 to 444, and 446 to 484; these read AESV…TAGF, QAIQ…LEKS, GLAA…RGLK, LHQT…SQLY, IRLV…EQVS, NLIE…AQSS, PSFA…NITL, and EDQL…GIHL. A Glycyl lysine isopeptide (Lys-Gly) (interchain with G-Cter in SUMO1); alternate cross-link involves residue Lys-791. Lys-791 participates in a covalent cross-link: Glycyl lysine isopeptide (Lys-Gly) (interchain with G-Cter in SUMO2); alternate.

Belongs to the Integrator subunit 4 family. As to quaternary structure, component of the Integrator complex, composed of core subunits INTS1, INTS2, INTS3, INTS4, INTS5, INTS6, INTS7, INTS8, INTS9/RC74, INTS10, INTS11/CPSF3L, INTS12, INTS13, INTS14 and INTS15. The core complex associates with protein phosphatase 2A subunits PPP2CA and PPP2R1A, to form the Integrator-PP2A (INTAC) complex. INTS4 is part of the RNA endonuclease subcomplex, composed of INTS4, INTS9, INTS11 and inositol hexakisphosphate (InsP6). Interacts with BRAT1; interaction is required for the assembly of the RNA endonuclease subcomplex.

The protein localises to the nucleus. The protein resides in the cytoplasm. In terms of biological role, component of the integrator complex, a multiprotein complex that terminates RNA polymerase II (Pol II) transcription in the promoter-proximal region of genes. The integrator complex provides a quality checkpoint during transcription elongation by driving premature transcription termination of transcripts that are unfavorably configured for transcriptional elongation: the complex terminates transcription by (1) catalyzing dephosphorylation of the C-terminal domain (CTD) of Pol II subunit POLR2A/RPB1 and SUPT5H/SPT5, (2) degrading the exiting nascent RNA transcript via endonuclease activity and (3) promoting the release of Pol II from bound DNA. The integrator complex is also involved in terminating the synthesis of non-coding Pol II transcripts, such as enhancer RNAs (eRNAs), small nuclear RNAs (snRNAs), telomerase RNAs and long non-coding RNAs (lncRNAs). Within the integrator complex, INTS4 acts as an scaffold that links INTS9 and INTS11. Mediates recruitment of cytoplasmic dynein to the nuclear envelope, probably as component of the integrator complex. This chain is Integrator complex subunit 4, found in Homo sapiens (Human).